Consider the following 295-residue polypeptide: Pantothenate synthetase (295 aa).

Catalysis depends on histidine 37, which acts as the Proton donor. Residue glutamine 61 participates in (R)-pantoate binding. Glutamine 61 contributes to the beta-alanine binding site. Residue 154–157 coordinates ATP; sequence GRKD. Glutamine 160 is a binding site for (R)-pantoate. ATP-binding positions include valine 183 and 191 to 194; that span reads QSSR.

Belongs to the pantothenate synthetase family. In terms of assembly, homodimer.

It localises to the cytoplasm. It carries out the reaction (R)-pantoate + beta-alanine + ATP = (R)-pantothenate + AMP + diphosphate + H(+). It participates in cofactor biosynthesis; (R)-pantothenate biosynthesis; (R)-pantothenate from (R)-pantoate and beta-alanine: step 1/1. Catalyzes the condensation of pantoate with beta-alanine in an ATP-dependent reaction via a pantoyl-adenylate intermediate. This Salinibacter ruber (strain DSM 13855 / M31) protein is Pantothenate synthetase.